A 20-amino-acid polypeptide reads, in one-letter code: Ranalexin-1Cb (20 aa).

A disulfide bond links Cys14 and Cys20.

Expressed by the skin glands.

Its subcellular location is the secreted. Antibacterial activity against Gram-positive bacterium S.aureus and Gram-negative bacterium E.coli. Has activity against C.albicans. The polypeptide is Ranalexin-1Cb (Lithobates clamitans (Green frog)).